The following is a 239-amino-acid chain: Ribosomal RNA small subunit methyltransferase G (239 aa).

Residues G78, F83, 129-130 (AE), and R148 contribute to the S-adenosyl-L-methionine site.

Belongs to the methyltransferase superfamily. RNA methyltransferase RsmG family.

The protein localises to the cytoplasm. Specifically methylates the N7 position of a guanine in 16S rRNA. The sequence is that of Ribosomal RNA small subunit methyltransferase G from Clostridium botulinum (strain ATCC 19397 / Type A).